We begin with the raw amino-acid sequence, 227 residues long: Probable methylthioribulose-1-phosphate dehydratase (227 aa).

Cysteine 87 lines the substrate pocket. Residues histidine 105 and histidine 107 each coordinate Zn(2+). Residue glutamate 129 is the Proton donor/acceptor of the active site. A Zn(2+)-binding site is contributed by histidine 185.

The protein belongs to the aldolase class II family. MtnB subfamily. Zn(2+) is required as a cofactor.

It localises to the cytoplasm. It catalyses the reaction 5-(methylsulfanyl)-D-ribulose 1-phosphate = 5-methylsulfanyl-2,3-dioxopentyl phosphate + H2O. The protein operates within amino-acid biosynthesis; L-methionine biosynthesis via salvage pathway; L-methionine from S-methyl-5-thio-alpha-D-ribose 1-phosphate: step 2/6. Its function is as follows. Catalyzes the dehydration of methylthioribulose-1-phosphate (MTRu-1-P) into 2,3-diketo-5-methylthiopentyl-1-phosphate (DK-MTP-1-P). The polypeptide is Probable methylthioribulose-1-phosphate dehydratase (Drosophila ananassae (Fruit fly)).